A 339-amino-acid polypeptide reads, in one-letter code: Ureidoglycine carbamoyltransferase (339 aa).

It belongs to the aspartate/ornithine carbamoyltransferase superfamily. Homodimer.

It carries out the reaction (S)-2-ureidoglycine + carbamoyl phosphate = allantoate + phosphate + H(+). Its pathway is purine metabolism. Catalyzes the phosphorolysis of allantoate to ureidoglycine and carbamoyl phosphate. Is likely involved in a purine degradation pathway. This is Ureidoglycine carbamoyltransferase from Rubrobacter xylanophilus (strain DSM 9941 / JCM 11954 / NBRC 16129 / PRD-1).